A 371-amino-acid polypeptide reads, in one-letter code: MSSPIQTAIVQTSETSAARLPLRVDRSAPIPQVKSEHHVLVRVLAVALNPNDHKMVTHFNMPDSIAGCDFCGIVTESSSNGTSLSSSAGARLPVGTRVCGALFPYSPEDPDNGSFAQYCVVDARLLVRVPDSWSDLEAASLGVGWSTISLAFSDPNALGLEGLPTQPSHRAKEPVLVYGGGTASGTLACQLLNLMGYTPIAIASNQSSELAMKYGASATACYTSKDCVDTVKSLAGKPIRRILDCITDAESAAICYSAMARSSGTYACLEECPDACRTRRIIKVKEVMGFQVLGVDIKLGDSTYTRLGDQKLMAIGIQWANEIQALMESGQLKAHPLRELPGGWEAIIEGLEMLRNGEVRGQKLVVRIPQE.

51-54 (NDHK) contributes to the NADP(+) binding site. Residue 145–152 (WSTISLAF) participates in substrate binding. NADP(+) is bound by residues 181-184 (GTAS), 204-207 (SNQS), Tyr222, and 269-270 (LE). 289 to 293 (GFQVL) is a substrate binding site. 359-360 (VR) contacts NADP(+).

The protein belongs to the zinc-containing alcohol dehydrogenase family. In terms of assembly, monomer.

It functions in the pathway secondary metabolite biosynthesis. Its function is as follows. Trans-enoyl reductase; part of the gene cluster that mediates the biosynthesis of calbistrin A and related compounds. Calbistrin A is a secondary metabolite with an interesting structure that was recently found to have bioactivity against leukemia cells. It consists of two polyketides linked by an ester bond: a bicyclic decalin containing polyketide and a linear 12 carbon dioic acid structure. The polyketide synthase calA is probably responsible for forming the decalin moiety. Because calA lacks a designated enoylreductase (ER) domain, the required activity is provided by the trans-enoyl reductase calK. Following release from the PKS, calF then probably catalyzes the oxidation and the subsequent Diels Alder cycloisomerization that lead to the formation of the decalin moiety. The decalin polyketide backbone includes two C-methyl groups, at C7 and C11 in backbone, of which the C7 position is probably methylated by the methyltransferase domain of calA. A candidate for adding the methyl group at C11, if not done by CalA, is the cluster methyltransferase calH. Several additional tailoring enzymes within the cluster could be involved in the modification of the decalin polyketide product. Those include the 3 cytochrome P450 monooxygenases CalE, CalG and CalL, of which one might be responsible for the introduction of the extra hydroxyl group attached to the backbone of the decalin moiety, at position C9 in the backbone, that allows for attachment of the linear moiety. One tailoring enzyme activity that is expected to be involved in biosynthesis of calbistrin is an acyltransferase for connecting the two polyketide synthase products, and which could be performed by the cluster acyltransferase calJ. The enzyme responsible for the biosynthesis of the linear moiety, probably a second PKS, has not been identified yet. The protein is Trans-enoyl reductase calK of Penicillium decumbens.